Reading from the N-terminus, the 574-residue chain is Glucose-6-phosphate 1-dehydrogenase, chloroplastic (574 aa).

NADP(+) contacts are provided by residues 93-100 (GASGDLAK) and Arg127. Cys145 and Cys153 are disulfide-bonded. Lys230 contributes to the NADP(+) binding site. D-glucose 6-phosphate is bound by residues Lys230, 260-264 (HYLGK), Glu298, and Asp317. His322 (proton acceptor) is an active-site residue. Lys415 is a binding site for NADP(+). D-glucose 6-phosphate is bound by residues Lys418 and Lys423. NADP(+) is bound by residues Arg424, Arg428, and Arg457. Residue Gln459 coordinates D-glucose 6-phosphate. NADP(+)-binding positions include 465-467 (YLK) and Arg550.

This sequence belongs to the glucose-6-phosphate dehydrogenase family. In terms of assembly, homodimer.

The protein localises to the plastid. The protein resides in the chloroplast. The catalysed reaction is D-glucose 6-phosphate + NADP(+) = 6-phospho-D-glucono-1,5-lactone + NADPH + H(+). Its pathway is carbohydrate degradation; pentose phosphate pathway; D-ribulose 5-phosphate from D-glucose 6-phosphate (oxidative stage): step 1/3. Regulated by metabolites. Post-translationally inactivated by cysteine-mediated redox modification via the ferredoxin-thioredoxin system in the light and this avoids futile cycles with photosynthetic CO2 fixation. Its function is as follows. Catalyzes the rate-limiting step of the oxidative pentose-phosphate pathway, which represents a route for the dissimilation of carbohydrates besides glycolysis. The main function of this enzyme is to provide reducing power (NADPH) and pentose phosphates for fatty acid and nucleic acid synthesis which are involved in membrane synthesis and cell division. The protein is Glucose-6-phosphate 1-dehydrogenase, chloroplastic (G6PD) of Spinacia oleracea (Spinach).